The following is a 62-amino-acid chain: DNA gyrase inhibitor YacG (62 aa).

4 residues coordinate Zn(2+): Cys9, Cys12, Cys27, and Cys31. Positions 43–52 (GYRIPGEKAP) are enriched in basic and acidic residues. Positions 43–62 (GYRIPGEKAPESGGEEPGDE) are disordered.

This sequence belongs to the DNA gyrase inhibitor YacG family. As to quaternary structure, interacts with GyrB. The cofactor is Zn(2+).

Functionally, inhibits all the catalytic activities of DNA gyrase by preventing its interaction with DNA. Acts by binding directly to the C-terminal domain of GyrB, which probably disrupts DNA binding by the gyrase. In Geobacter sp. (strain M21), this protein is DNA gyrase inhibitor YacG.